Here is a 243-residue protein sequence, read N- to C-terminus: Probable transcriptional regulatory protein BPP2422 (243 aa).

The interval 1-21 (MAGHSKWANIQHRKGRQDAKR) is disordered.

It belongs to the TACO1 family.

Its subcellular location is the cytoplasm. The protein is Probable transcriptional regulatory protein BPP2422 of Bordetella parapertussis (strain 12822 / ATCC BAA-587 / NCTC 13253).